A 542-amino-acid chain; its full sequence is Propane 2-monooxygenase, hydroxylase component large subunit (542 aa).

Positions 97, 127, 130, 192, 226, and 229 each coordinate Fe cation.

This sequence belongs to the TmoA/XamoA family. As to quaternary structure, the propane 2-monooxygenase multicomponent enzyme system is composed of an electron transfer component and a monooxygenase component interacting with the effector protein MimD. The electron transfer component is composed of a reductase (MimB), and the monooxygenase component is formed by a large subunit (MimA) and a small subunit (MimC). Requires the presence of the chaperonin-like protein MimG to ensure a productive folding, resulting of a soluble MimA, which leads to the active form of MimABCD. Fe(2+) is required as a cofactor.

The enzyme catalyses propane + NADH + O2 + H(+) = propan-2-ol + NAD(+) + H2O. It carries out the reaction acetone + NADH + O2 + H(+) = hydroxyacetone + NAD(+) + H2O. The catalysed reaction is butan-2-one + NADH + O2 + H(+) = 1-hydroxy-2-butanone + NAD(+) + H2O. It catalyses the reaction phenol + NADH + O2 + H(+) = hydroquinone + NAD(+) + H2O. Its function is as follows. Component of the propane 2-monooxygenase multicomponent enzyme system which is involved in the degradation of propane via the O2-dependent hydroxylation of propane. Also involved in the degradation of acetone via the O2-dependent hydroxylation of acetone. Also able to catalyze the oxidation of phenol, methylethylketone (2-butanone), 1-propanol and 2-propanol. In Mycolicibacterium smegmatis (strain ATCC 700084 / mc(2)155) (Mycobacterium smegmatis), this protein is Propane 2-monooxygenase, hydroxylase component large subunit.